We begin with the raw amino-acid sequence, 308 residues long: tRNA dimethylallyltransferase (308 aa).

ATP is bound at residue 8-15 (GATAVGKT). 10–15 (TAVGKT) is a binding site for substrate. Positions 33 to 36 (DSRQ) are interaction with substrate tRNA.

This sequence belongs to the IPP transferase family. As to quaternary structure, monomer. The cofactor is Mg(2+).

The enzyme catalyses adenosine(37) in tRNA + dimethylallyl diphosphate = N(6)-dimethylallyladenosine(37) in tRNA + diphosphate. Functionally, catalyzes the transfer of a dimethylallyl group onto the adenine at position 37 in tRNAs that read codons beginning with uridine, leading to the formation of N6-(dimethylallyl)adenosine (i(6)A). In Kosmotoga olearia (strain ATCC BAA-1733 / DSM 21960 / TBF 19.5.1), this protein is tRNA dimethylallyltransferase.